The sequence spans 391 residues: Trehalose-phosphate phosphatase (391 aa).

Aspartate 147 serves as the catalytic Nucleophile. Mg(2+)-binding residues include aspartate 147, aspartate 149, and aspartate 330. 147–149 (DFD) lines the substrate pocket.

Belongs to the trehalose phosphatase family. Mg(2+) is required as a cofactor.

The catalysed reaction is alpha,alpha-trehalose 6-phosphate + H2O = alpha,alpha-trehalose + phosphate. It participates in glycan biosynthesis; trehalose biosynthesis. In terms of biological role, removes the phosphate from trehalose 6-phosphate to produce free trehalose. The chain is Trehalose-phosphate phosphatase (otsB) from Mycobacterium avium (strain 104).